Here is a 65-residue protein sequence, read N- to C-terminus: Large ribosomal subunit protein bL35 (65 aa).

The disordered stretch occupies residues methionine 1–phenylalanine 22.

Belongs to the bacterial ribosomal protein bL35 family.

This is Large ribosomal subunit protein bL35 from Francisella philomiragia subsp. philomiragia (strain ATCC 25017 / CCUG 19701 / FSC 153 / O#319-036).